The chain runs to 510 residues: Inositol-3-phosphate synthase (510 aa).

NAD(+) contacts are provided by glycine 70, glycine 71, asparagine 72, asparagine 73, aspartate 143, isoleucine 180, glutamine 190, arginine 193, threonine 230, alanine 231, asparagine 232, threonine 233, glycine 281, serine 282, aspartate 306, serine 309, asparagine 340, asparagine 341, aspartate 342, lysine 355, alanine 393, aspartate 394, aspartate 422, and serine 423.

Belongs to the myo-inositol 1-phosphate synthase family. The cofactor is NAD(+).

The protein resides in the cytoplasm. It localises to the cytosol. The protein localises to the nucleus. The enzyme catalyses D-glucose 6-phosphate = 1D-myo-inositol 3-phosphate. It participates in polyol metabolism; myo-inositol biosynthesis; myo-inositol from D-glucose 6-phosphate: step 1/2. Key enzyme in myo-inositol biosynthesis pathway that catalyzes the conversion of glucose 6-phosphate to 1-myo-inositol 1-phosphate in a NAD-dependent manner. In Brassica napus (Rape), this protein is Inositol-3-phosphate synthase.